A 63-amino-acid polypeptide reads, in one-letter code: uncharacterized protein (63 aa).

This is an uncharacterized protein from Saccharomyces cerevisiae (strain ATCC 204508 / S288c) (Baker's yeast).